Consider the following 273-residue polypeptide: Large ribosomal subunit protein uL2 (273 aa).

Disordered regions lie at residues 32-53 (PLVE…TTRH) and 221-273 (RGTA…RRSK). Positions 39-48 (KSGGRNNNGR) are enriched in low complexity.

This sequence belongs to the universal ribosomal protein uL2 family. As to quaternary structure, part of the 50S ribosomal subunit. Forms a bridge to the 30S subunit in the 70S ribosome.

In terms of biological role, one of the primary rRNA binding proteins. Required for association of the 30S and 50S subunits to form the 70S ribosome, for tRNA binding and peptide bond formation. It has been suggested to have peptidyltransferase activity; this is somewhat controversial. Makes several contacts with the 16S rRNA in the 70S ribosome. The protein is Large ribosomal subunit protein uL2 of Erwinia tasmaniensis (strain DSM 17950 / CFBP 7177 / CIP 109463 / NCPPB 4357 / Et1/99).